The chain runs to 179 residues: Inner membrane-spanning protein YciB (179 aa).

The next 5 membrane-spanning stretches (helical) occupy residues isoleucine 22–valine 42, methionine 50–asparagine 70, tryptophan 76–methionine 96, leucine 121–leucine 141, and phenylalanine 149–isoleucine 169.

It belongs to the YciB family.

The protein resides in the cell inner membrane. Its function is as follows. Plays a role in cell envelope biogenesis, maintenance of cell envelope integrity and membrane homeostasis. The polypeptide is Inner membrane-spanning protein YciB (Citrobacter koseri (strain ATCC BAA-895 / CDC 4225-83 / SGSC4696)).